Here is a 429-residue protein sequence, read N- to C-terminus: 3-phosphoshikimate 1-carboxyvinyltransferase (429 aa).

3-phosphoshikimate is bound by residues K20, S21, and R25. K20 contributes to the phosphoenolpyruvate binding site. The phosphoenolpyruvate site is built by G89 and R118. Residues S164, S165, Q166, S192, D311, and K338 each contribute to the 3-phosphoshikimate site. Q166 is a phosphoenolpyruvate binding site. Catalysis depends on D311, which acts as the Proton acceptor. R342 and R384 together coordinate phosphoenolpyruvate.

This sequence belongs to the EPSP synthase family. In terms of assembly, monomer.

It is found in the cytoplasm. The enzyme catalyses 3-phosphoshikimate + phosphoenolpyruvate = 5-O-(1-carboxyvinyl)-3-phosphoshikimate + phosphate. It participates in metabolic intermediate biosynthesis; chorismate biosynthesis. In terms of biological role, catalyzes the transfer of the enolpyruvyl moiety of phosphoenolpyruvate (PEP) to the 5-hydroxyl of shikimate-3-phosphate (S3P) to produce enolpyruvyl shikimate-3-phosphate and inorganic phosphate. The sequence is that of 3-phosphoshikimate 1-carboxyvinyltransferase from Methanococcus maripaludis (strain C7 / ATCC BAA-1331).